Consider the following 522-residue polypeptide: 2-isopropylmalate synthase (522 aa).

A Pyruvate carboxyltransferase domain is found at 5-267; sequence VIIFDTTLRD…ETGINAKEIH (263 aa). 4 residues coordinate Mn(2+): aspartate 14, histidine 202, histidine 204, and asparagine 238. Residues 392-522 are regulatory domain; the sequence is QLQQLVVQSD…MQKNRELGGV (131 aa).

Belongs to the alpha-IPM synthase/homocitrate synthase family. LeuA type 1 subfamily. Homodimer. The cofactor is Mn(2+).

The protein resides in the cytoplasm. It carries out the reaction 3-methyl-2-oxobutanoate + acetyl-CoA + H2O = (2S)-2-isopropylmalate + CoA + H(+). Its pathway is amino-acid biosynthesis; L-leucine biosynthesis; L-leucine from 3-methyl-2-oxobutanoate: step 1/4. Its function is as follows. Catalyzes the condensation of the acetyl group of acetyl-CoA with 3-methyl-2-oxobutanoate (2-ketoisovalerate) to form 3-carboxy-3-hydroxy-4-methylpentanoate (2-isopropylmalate). In Shewanella baltica (strain OS223), this protein is 2-isopropylmalate synthase.